Reading from the N-terminus, the 465-residue chain is FAD-dependent monooxygenase pyr5 (465 aa).

An N-terminal signal peptide occupies residues 1–16; the sequence is MRVLIIGGSIAGLTLA. Residues glutamate 30, glycine 44, and arginine 103 each contribute to the FAD site. Tyrosine 210 is an active-site residue. Residues aspartate 306 and alanine 319 each coordinate FAD. Residues 440–456 traverse the membrane as a helical segment; the sequence is PTFPLTVAGLCLVAIVI.

The protein belongs to the paxM FAD-dependent monooxygenase family. It depends on FAD as a cofactor.

It is found in the membrane. The enzyme catalyses 4-hydroxy-3-[(2E,6E)-farnesyl]-6-(pyridin-3-yl)-2H-pyran-2-one + NADPH + O2 + H(+) = 2-oxo-3-[(8S)-epoxy-(2E,6E)-farnesyl]-6-(pyridin-3-yl)-2H-pyran-4-olate + NADP(+) + H2O. It participates in secondary metabolite biosynthesis; terpenoid biosynthesis. Its function is as follows. FAD-dependent monooxygenase; part of the gene cluster that mediates the biosynthesis of pyripyropene A, a specific human acyl-coenzyme A:cholesterol acyltransferase 2 inhibitor. The first step of the pathway is the synthesis of nicotinyl-CoA from nicotinic acid by the nicotinic acid-CoA ligase pyr1. Nicotinyl-CoA is then a substrate of polyketide synthase pyr2 to produce 4-hydroxy-6-(3-pyridinyl)-2H-pyran-2-one (HPPO) which is further prenylated by the polyprenyl transferase pyr6 to yield farnesyl-HPPO. The next steps consist of an epoxidation of farnesyl-HPPO to epoxyfarnesyl-HPPO by FAD-dependent monooxygenase pyr5 and a cyclization of the terpenoid portion by the terpene cyclase pyr4 to yield deacetyl-pyripyropene E. The 2 cytochrome P450 monooxygenases pyr3 and pyr9, and the 2 acetyltransferases pyr7 and pyr8 are involved in the conversion of deacetyl-pyripyropene E into pyripyropene A through several cycles of oxidation and acetylation steps. Pyr7 acetylates deacetyl-pyripyropene E to pyripyropene E which is oxidized to 11-deacetyl-pyripyropene O by pyr3, which is in turn acetylated into pyripyropene O by pyr8. Pyripyropene O is then oxidized to deacetyl-pyripyropene A by pyr9. Deacetyl-pyripyropene A is finally acetylated to pyripyropene A by pyr8. This is FAD-dependent monooxygenase pyr5 from Aspergillus fumigatus (strain ATCC MYA-4609 / CBS 101355 / FGSC A1100 / Af293) (Neosartorya fumigata).